Consider the following 236-residue polypeptide: Phosphoribosylaminoimidazole-succinocarboxamide synthase (236 aa).

The protein belongs to the SAICAR synthetase family.

It carries out the reaction 5-amino-1-(5-phospho-D-ribosyl)imidazole-4-carboxylate + L-aspartate + ATP = (2S)-2-[5-amino-1-(5-phospho-beta-D-ribosyl)imidazole-4-carboxamido]succinate + ADP + phosphate + 2 H(+). Its pathway is purine metabolism; IMP biosynthesis via de novo pathway; 5-amino-1-(5-phospho-D-ribosyl)imidazole-4-carboxamide from 5-amino-1-(5-phospho-D-ribosyl)imidazole-4-carboxylate: step 1/2. The chain is Phosphoribosylaminoimidazole-succinocarboxamide synthase from Rickettsia typhi (strain ATCC VR-144 / Wilmington).